A 49-amino-acid chain; its full sequence is Cytochrome b559 subunit beta (49 aa).

Residues 24–40 (WLAVHVLGVPTVFFLGA) traverse the membrane as a helical segment. Histidine 28 is a heme binding site.

This sequence belongs to the PsbE/PsbF family. In terms of assembly, heterodimer of an alpha subunit and a beta subunit. PSII is composed of 1 copy each of membrane proteins PsbA, PsbB, PsbC, PsbD, PsbE, PsbF, PsbH, PsbI, PsbJ, PsbK, PsbL, PsbM, PsbT, PsbX, PsbY, Psb30/Ycf12, peripheral proteins PsbO, CyanoQ (PsbQ), PsbU, PsbV and a large number of cofactors. It forms dimeric complexes. It depends on heme b as a cofactor.

It localises to the cellular thylakoid membrane. Its function is as follows. This b-type cytochrome is tightly associated with the reaction center of photosystem II (PSII). PSII is a light-driven water:plastoquinone oxidoreductase that uses light energy to abstract electrons from H(2)O, generating O(2) and a proton gradient subsequently used for ATP formation. It consists of a core antenna complex that captures photons, and an electron transfer chain that converts photonic excitation into a charge separation. The polypeptide is Cytochrome b559 subunit beta (Prochlorococcus marinus (strain MIT 9303)).